Consider the following 521-residue polypeptide: GMP synthase [glutamine-hydrolyzing] (521 aa).

The Glutamine amidotransferase type-1 domain occupies 9–203 (KILILDFGSQ…ISGICQCEKN (195 aa)). Catalysis depends on cysteine 86, which acts as the Nucleophile. Active-site residues include histidine 177 and glutamate 179. One can recognise a GMPS ATP-PPase domain in the interval 204–396 (WTTDNIIAKL…LSIPPHIIYR (193 aa)). 231–237 (SGGVDSL) contacts ATP.

In terms of assembly, homodimer.

It carries out the reaction XMP + L-glutamine + ATP + H2O = GMP + L-glutamate + AMP + diphosphate + 2 H(+). Its pathway is purine metabolism; GMP biosynthesis; GMP from XMP (L-Gln route): step 1/1. Its function is as follows. Catalyzes the synthesis of GMP from XMP. This is GMP synthase [glutamine-hydrolyzing] from Ruthia magnifica subsp. Calyptogena magnifica.